A 294-amino-acid chain; its full sequence is Ferredoxin--NADP reductase (294 aa).

Positions 13–137 (KNPYIGKCLS…TGPVGKEMLL (125 aa)) constitute an FAD-binding FR-type domain. Residues 72 to 75 (RLYS), 93 to 95 (CVR), tyrosine 99, 111 to 113 (VCS), and threonine 152 contribute to the FAD site. Residues serine 75 and arginine 95 each coordinate NADP(+). Residues threonine 152, 184–185 (IP), 214–215 (SR), lysine 224, 224–228 (KMYIQ), 253–254 (GL), and glutamate 292 each bind NADP(+).

The protein belongs to the ferredoxin--NADP reductase type 1 family. It depends on FAD as a cofactor.

It is found in the cellular thylakoid membrane. It carries out the reaction 2 reduced [2Fe-2S]-[ferredoxin] + NADP(+) + H(+) = 2 oxidized [2Fe-2S]-[ferredoxin] + NADPH. The chain is Ferredoxin--NADP reductase (petH) from Spirulina sp.